The primary structure comprises 345 residues: tRNA N6-adenosine threonylcarbamoyltransferase (345 aa).

Residues His-115 and His-119 each coordinate Fe cation. Residues 137–141 (LVSGG), Asp-170, Gly-183, Asp-187, and Asn-276 contribute to the substrate site. Asp-306 contacts Fe cation.

It belongs to the KAE1 / TsaD family. It depends on Fe(2+) as a cofactor.

The protein resides in the cytoplasm. The catalysed reaction is L-threonylcarbamoyladenylate + adenosine(37) in tRNA = N(6)-L-threonylcarbamoyladenosine(37) in tRNA + AMP + H(+). In terms of biological role, required for the formation of a threonylcarbamoyl group on adenosine at position 37 (t(6)A37) in tRNAs that read codons beginning with adenine. Is involved in the transfer of the threonylcarbamoyl moiety of threonylcarbamoyl-AMP (TC-AMP) to the N6 group of A37, together with TsaE and TsaB. TsaD likely plays a direct catalytic role in this reaction. The chain is tRNA N6-adenosine threonylcarbamoyltransferase from Pediococcus pentosaceus (strain ATCC 25745 / CCUG 21536 / LMG 10740 / 183-1w).